The chain runs to 183 residues: GMP synthase [glutamine-hydrolyzing] subunit A (183 aa).

The Glutamine amidotransferase type-1 domain maps to 3–183 (HILVVDNHGQ…VFENFVAICE (181 aa)). Cys74 (nucleophile) is an active-site residue. Catalysis depends on residues His162 and Glu164.

Heterodimer composed of a glutamine amidotransferase subunit (A) and a GMP-binding subunit (B).

It carries out the reaction XMP + L-glutamine + ATP + H2O = GMP + L-glutamate + AMP + diphosphate + 2 H(+). Its pathway is purine metabolism; GMP biosynthesis; GMP from XMP (L-Gln route): step 1/1. In terms of biological role, catalyzes the synthesis of GMP from XMP. The protein is GMP synthase [glutamine-hydrolyzing] subunit A of Halobacterium salinarum (strain ATCC 700922 / JCM 11081 / NRC-1) (Halobacterium halobium).